Here is a 556-residue protein sequence, read N- to C-terminus: Potassium-transporting ATPase potassium-binding subunit (556 aa).

The next 10 helical transmembrane spans lie at 6–26 (AGLI…VPLG), 65–85 (GVLA…LVQG), 133–153 (GLAV…VALV), 176–196 (LRIL…GGAI), 249–269 (PTAW…FSLP), 283–303 (YAIA…MLWF), 378–398 (GLYG…LMVG), 419–439 (YFLV…ALPG), 483–503 (ALGL…LALA), and 526–546 (FVGM…LPML).

This sequence belongs to the KdpA family. As to quaternary structure, the system is composed of three essential subunits: KdpA, KdpB and KdpC.

The protein localises to the cell membrane. Part of the high-affinity ATP-driven potassium transport (or Kdp) system, which catalyzes the hydrolysis of ATP coupled with the electrogenic transport of potassium into the cytoplasm. This subunit binds the extracellular potassium ions and delivers the ions to the membrane domain of KdpB through an intramembrane tunnel. This Mycobacterium avium (strain 104) protein is Potassium-transporting ATPase potassium-binding subunit.